Reading from the N-terminus, the 231-residue chain is Large ribosomal subunit protein uL1 (231 aa).

The protein belongs to the universal ribosomal protein uL1 family. As to quaternary structure, part of the 50S ribosomal subunit.

Its function is as follows. Binds directly to 23S rRNA. The L1 stalk is quite mobile in the ribosome, and is involved in E site tRNA release. In terms of biological role, protein L1 is also a translational repressor protein, it controls the translation of the L11 operon by binding to its mRNA. In Francisella tularensis subsp. tularensis (strain WY96-3418), this protein is Large ribosomal subunit protein uL1.